The primary structure comprises 392 residues: Succinate--CoA ligase [ADP-forming] subunit beta (392 aa).

Positions 9–236 (KELFAAHGVP…PSAADPLEAK (228 aa)) constitute an ATP-grasp domain. ATP is bound by residues Lys45, 52-54 (GRG), Val94, and Glu99. Residues Asn191 and Asp205 each coordinate Mg(2+). Substrate contacts are provided by residues Asn256 and 318 to 320 (GIT).

The protein belongs to the succinate/malate CoA ligase beta subunit family. In terms of assembly, heterotetramer of two alpha and two beta subunits. Requires Mg(2+) as cofactor.

It catalyses the reaction succinate + ATP + CoA = succinyl-CoA + ADP + phosphate. The enzyme catalyses GTP + succinate + CoA = succinyl-CoA + GDP + phosphate. The protein operates within carbohydrate metabolism; tricarboxylic acid cycle; succinate from succinyl-CoA (ligase route): step 1/1. Succinyl-CoA synthetase functions in the citric acid cycle (TCA), coupling the hydrolysis of succinyl-CoA to the synthesis of either ATP or GTP and thus represents the only step of substrate-level phosphorylation in the TCA. The beta subunit provides nucleotide specificity of the enzyme and binds the substrate succinate, while the binding sites for coenzyme A and phosphate are found in the alpha subunit. In Acidothermus cellulolyticus (strain ATCC 43068 / DSM 8971 / 11B), this protein is Succinate--CoA ligase [ADP-forming] subunit beta.